The sequence spans 84 residues: Putative membrane protein insertion efficiency factor (84 aa).

The protein belongs to the UPF0161 family.

It is found in the cell inner membrane. Functionally, could be involved in insertion of integral membrane proteins into the membrane. The protein is Putative membrane protein insertion efficiency factor of Shewanella sp. (strain ANA-3).